We begin with the raw amino-acid sequence, 3649 residues long: N-(5-amino-5-carboxypentanoyl)-L-cysteinyl-D-valine synthase (3649 aa).

Residues 401–861 (SRDRAYVTYT…LAGHLESQGH (461 aa)) are domain 1 (adipate-activating). Carrier domains lie at 783 to 860 (APLL…ESQG), 1859 to 1936 (APVS…QAAA), and 2909 to 2984 (APRD…LSGL). Residues Ser-820, Ser-1896, and Ser-2944 each carry the O-(pantetheine 4'-phosphoryl)serine modification. The domain 2 (cysteine-activating) stretch occupies residues 1014 to 1937 (HHIILDGWSL…QAEHIQAAAL (924 aa)). Residues 2079-2985 (HHSCFDGWSW…FVDNVLSGLA (907 aa)) form a domain 3 (valine-activating) region. Residue Ser-3502 is the For thioesterase activity of the active site.

Belongs to the ATP-dependent AMP-binding enzyme family. The cofactor is pantetheine 4'-phosphate.

It catalyses the reaction L-2-aminoadipate + L-valine + L-cysteine + 3 ATP + H2O = N-[(5S)-5-amino-5-carboxypentanoyl]-L-cysteinyl-D-valine + 3 AMP + 3 diphosphate + 3 H(+). It functions in the pathway antibiotic biosynthesis; penicillin G biosynthesis; penicillin G from L-alpha-aminoadipate and L-cysteine and L-valine: step 1/3. Its function is as follows. Each of the constituent amino acids of the tripeptide acv are activated as aminoacyl-adenylates with peptide bonds formed through the participation of amino acid thioester intermediates. The chain is N-(5-amino-5-carboxypentanoyl)-L-cysteinyl-D-valine synthase (pcbAB) from Amycolatopsis lactamdurans (Nocardia lactamdurans).